The sequence spans 462 residues: Glycine--tRNA ligase (462 aa).

2 residues coordinate substrate: arginine 98 and glutamate 174. Residues 206–208, 216–221, 290–291, and 334–337 each bind ATP; these read RNE, FRTREF, EL, and GADR. Residue 221–225 coordinates substrate; the sequence is FEQME. Residue 330–334 coordinates substrate; that stretch reads EPSLG.

Belongs to the class-II aminoacyl-tRNA synthetase family. As to quaternary structure, homodimer.

It is found in the cytoplasm. The catalysed reaction is tRNA(Gly) + glycine + ATP = glycyl-tRNA(Gly) + AMP + diphosphate. Catalyzes the attachment of glycine to tRNA(Gly). The polypeptide is Glycine--tRNA ligase (Lachnoclostridium phytofermentans (strain ATCC 700394 / DSM 18823 / ISDg) (Clostridium phytofermentans)).